A 1330-amino-acid chain; its full sequence is Sister chromatid cohesion protein PDS5 homolog A (1330 aa).

The HEAT repeat unit spans residues 387 to 423 (SLVNDQLLGFVRERTLDKRWRVRKEAMMGLAQLYKKY). Residues 1138–1330 (VNKPLSATGR…AAQRQIDLQR (193 aa)) are disordered. A compositionally biased stretch (low complexity) spans 1160–1171 (SNISVNSELSSS). Residues 1216 to 1225 (SDQATQGNST) are compositionally biased toward polar residues.

Belongs to the PDS5 family. In terms of assembly, interacts with the cohesin complex. Binds chromatin in a cohesin-dependent manner.

The protein resides in the nucleus. May regulate sister chromatid cohesion during mitosis and couple it to DNA replication. The polypeptide is Sister chromatid cohesion protein PDS5 homolog A (Gallus gallus (Chicken)).